The primary structure comprises 212 residues: Thiamine-phosphate synthase (212 aa).

4-amino-2-methyl-5-(diphosphooxymethyl)pyrimidine is bound by residues 39–43 (QLRIK) and Asn71. Mg(2+) is bound by residues Asp72 and Asp91. Ser110 is a binding site for 4-amino-2-methyl-5-(diphosphooxymethyl)pyrimidine. 136-138 (TQT) is a binding site for 2-[(2R,5Z)-2-carboxy-4-methylthiazol-5(2H)-ylidene]ethyl phosphate. Residue Lys139 coordinates 4-amino-2-methyl-5-(diphosphooxymethyl)pyrimidine. Residues Gly168 and 188–189 (VS) contribute to the 2-[(2R,5Z)-2-carboxy-4-methylthiazol-5(2H)-ylidene]ethyl phosphate site.

This sequence belongs to the thiamine-phosphate synthase family. Mg(2+) is required as a cofactor.

The enzyme catalyses 2-[(2R,5Z)-2-carboxy-4-methylthiazol-5(2H)-ylidene]ethyl phosphate + 4-amino-2-methyl-5-(diphosphooxymethyl)pyrimidine + 2 H(+) = thiamine phosphate + CO2 + diphosphate. It catalyses the reaction 2-(2-carboxy-4-methylthiazol-5-yl)ethyl phosphate + 4-amino-2-methyl-5-(diphosphooxymethyl)pyrimidine + 2 H(+) = thiamine phosphate + CO2 + diphosphate. It carries out the reaction 4-methyl-5-(2-phosphooxyethyl)-thiazole + 4-amino-2-methyl-5-(diphosphooxymethyl)pyrimidine + H(+) = thiamine phosphate + diphosphate. It functions in the pathway cofactor biosynthesis; thiamine diphosphate biosynthesis; thiamine phosphate from 4-amino-2-methyl-5-diphosphomethylpyrimidine and 4-methyl-5-(2-phosphoethyl)-thiazole: step 1/1. Functionally, condenses 4-methyl-5-(beta-hydroxyethyl)thiazole monophosphate (THZ-P) and 2-methyl-4-amino-5-hydroxymethyl pyrimidine pyrophosphate (HMP-PP) to form thiamine monophosphate (TMP). The protein is Thiamine-phosphate synthase of Serratia proteamaculans (strain 568).